The following is a 414-amino-acid chain: MADETPKVKTEPAAEVKSPLDEVKEIRKEAELTQTGSDEKKTTDPEFITVQDPNGDEPIELPTVDGVVLMTTLQASFPGATGLKYKNPKTGANRAVQVDPSGLKLIAPADGWENKTFFVIVAPQSERVRALSSADATSAKRRKVGSSDDSDSDDGRDGRSGRKRAVERDSQPVDLIVLGVDFKTTDECFQKYFEDIGTVVFCEIKRKSDGNSKGFGFVRMSSVGEQNKVLAIPQHMIDGRRCDVKVPDGRSLQDKQGRPSISRIFVGRLTDKVDEHQLRKVFGDEAKSYIETAVVTDVFIPKPFRGFAFVTLSSAEAAERIVSKGSLTVNGLSVGLSIAQPREENNQSVGPDYGLPAGYRNRRERDRPDRRPIQNEAPLPMPFVRPPQDYSYRQQNSPLERRYWAPGDSRGPGW.

2 stretches are compositionally biased toward basic and acidic residues: residues 1–44 (MADE…KTTD) and 153–167 (DDGR…RAVE). Disordered stretches follow at residues 1–58 (MADE…GDEP) and 132–167 (SSAD…RAVE). RRM domains are found at residues 173–259 (VDLI…QGRP) and 262–341 (SRIF…IAQP). The interval 343–414 (EENNQSVGPD…APGDSRGPGW (72 aa)) is disordered. The span at 361 to 373 (NRRERDRPDRRPI) shows a compositional bias: basic and acidic residues.

Interacts with chromobox protein homolog hpl-2; interaction may maintain localization of hpl-2 to gene bodies. As to expression, widely expressed in a range of tissues including body wall muscles, pharynx and neurons of the midbody in adults and larvae.

The protein resides in the nucleus. The protein localises to the cytoplasm. Functionally, RNA-binding protein which regulates transcription, splicing and RNA-editing. Limits the accumulation of double-stranded RNA by maintaining the abundance of the mature RNA transcripts that are formed from double-stranded precursor RNAs. Stress response protein that acts downstream of daf-16 in the insulin/IGF pathway to regulate longevity and the cellular stress response to osmotic, oxidative, proteotoxic and endoplasmic reticulum stress. Involved in the regulation of physiological processes including aging, fertility, growth and locomotion. Plays a role in maintaining localization of chromobox protein homolog hpl-2 to gene bodies, perhaps acting via binding to nascent RNA transcripts. The sequence is that of Tar DNA-binding protein homolog 1 from Caenorhabditis elegans.